Here is a 1848-residue protein sequence, read N- to C-terminus: Cellulose-binding protein A (1848 aa).

A signal peptide spans 1–28 (MQKKKSLNLLLALMMVFALVLPSIPALA). Positions 29 to 190 (ATSSMSVEFY…GAKVLGTAPG (162 aa)) constitute a CBM3 domain. Cohesin domains are found at residues 291–428 (VTAT…TVTI), 435–570 (MQIS…SVTI), 668–801 (VTAT…SVTI), 810–943 (VTAT…SVTI), 952–1085 (VTAT…SVTI), 1094–1227 (VTAT…SVTI), 1236–1369 (VTAT…SVTI), 1377–1511 (VKAT…RLTI), and 1709–1847 (FAVK…SVKV).

Post-translationally, the N-terminus is blocked. In terms of processing, glycosylated.

The protein resides in the secreted. Its function is as follows. Binds to cellulose fibers and coordinates cellulase enzymes. This chain is Cellulose-binding protein A (cbpA), found in Clostridium cellulovorans.